We begin with the raw amino-acid sequence, 590 residues long: MSAPKFGYVLLLIVLINISNNGVDAFHKVFKKLQSKSTSLESVSPLHRTAYHFQPPRHWINDPNAPMLYKGVYHLFYQYNPKGAVWGNIVWAHSVSKDLINWEALEPAIYPSKWFDINGTWSGSATHVPGKGPVILYTGITENQTQIQNYAIPQDLSDPYLKTWIKPDDNPIVKPDNGENGSAFRDPTTAWFNKKDGYWRMLVGSKRKNRGIAYMYKSRDFKKWVKSKRPIHSRKKTGMWECPDFFPVSVTDKKNGLDFSYDGPNAKHVLKVSLDLTRYEYYTLGTYDTKKDRYRPDGYTPDGWDGLRFDYGNYYASKTFFDDKTNRRILWGWANESDTVQDDTVKGWAGIQLIPRTILLDSSGKQLVFWPIEEIESLRGKNVQMTNQKMEMGQRFEVQGITPAQVDVDVTFNVGNLEKAEKFDESFATKPLELCNLKGSNVNGGVGPFGLITLATSDLEEYTPVFFRVFKDAASNKPKVLMCSDAKPSSLKKDTGTDAKERMYKPSFAGFVDVGLLDGKISLRSLIDHSVVESFGAKGKTVITSRVYPTKAVGEKAHLFVFNNGSQPVTVESLNAWNMQKPLKMNQGAK.

Positions 1-25 (MSAPKFGYVLLLIVLINISNNGVDA) are cleaved as a signal peptide. Residues 59–62 (WIND), glutamine 78, and tryptophan 86 each bind substrate. Aspartate 62 is an active-site residue. Asparagine 118 carries an N-linked (GlcNAc...) asparagine glycan. Residue 121-122 (WS) coordinates substrate. Asparagine 143 and asparagine 180 each carry an N-linked (GlcNAc...) asparagine glycan. Substrate-binding positions include 185-186 (RD), glutamate 241, and aspartate 275. An N-linked (GlcNAc...) asparagine glycan is attached at asparagine 335. Residues cysteine 435 and cysteine 483 are joined by a disulfide bond. N-linked (GlcNAc...) asparagine glycosylation is present at asparagine 564.

This sequence belongs to the glycosyl hydrolase 32 family. As to expression, expressed in flowers, and seeds.

It localises to the secreted. It is found in the extracellular space. The protein localises to the apoplast. The protein resides in the cell wall. It catalyses the reaction Hydrolysis of terminal non-reducing beta-D-fructofuranoside residues in beta-D-fructofuranosides.. This is Beta-fructofuranosidase, insoluble isoenzyme CWINV2 (CWINV2) from Arabidopsis thaliana (Mouse-ear cress).